The following is a 506-amino-acid chain: uncharacterized protein (506 aa).

This sequence to group II intron maturases.

It is found in the plastid. It localises to the chloroplast. This is an uncharacterized protein from Euglena gracilis.